The primary structure comprises 746 residues: Histone-lysine N-methyltransferase EZH2 (746 aa).

The interval 1–340 (MGQTGKKSEK…AKEFAAALTA (340 aa)) is interaction with DNMT1, DNMT3A and DNMT3B. Ser-21 is subject to Phosphoserine; by PKB/AKT1. The segment at 39-68 (KTMFSSNRQKILERTETLNQEWKQRRIQPV) is interaction with EED. Residue Ser-75 is glycosylated (O-linked (GlcNAc) serine). Phosphoserine is present on Ser-76. The disordered stretch occupies residues 180–217 (QYNDDDDDDDGDDPDEREEKQKDLEDNRDDKETCPPRK). Residues 182-195 (NDDDDDDDGDDPDE) show a composition bias toward acidic residues. Residues 196-217 (REEKQKDLEDNRDDKETCPPRK) show a composition bias toward basic and acidic residues. An interaction with CDYL region spans residues 329–522 (EGAKEFAAAL…SSNHVYNYQP (194 aa)). Thr-339 bears the Phosphothreonine mark. The interval 340–426 (AERIKTPPKR…PIKMKPNIEP (87 aa)) is disordered. Thr-345 is subject to Phosphothreonine; by CDK1 and CDK2. The span at 345–357 (TPPKRPGGRRRGR) shows a compositional bias: basic residues. Phosphoserine is present on residues Ser-363 and Ser-366. Thr-367 bears the Phosphothreonine mark. The span at 374 to 385 (ESKDTDSDREAG) shows a compositional bias: basic and acidic residues. Residue Thr-487 is modified to Phosphothreonine. The 103-residue stretch at 503–605 (CRKIQLKKDG…SKNVSCKNCS (103 aa)) folds into the CXC domain. The region spanning 612 to 727 (KHLLLAPSDV…TGEELFFDYR (116 aa)) is the SET domain. Residue Lys-634 forms a Glycyl lysine isopeptide (Lys-Gly) (interchain with G-Cter in SUMO2) linkage.

This sequence belongs to the class V-like SAM-binding methyltransferase superfamily. Histone-lysine methyltransferase family. EZ subfamily. In terms of assembly, component of the PRC2/EED-EZH2 complex, which includes EED, EZH2, SUZ12, RBBP4 and RBBP7 and possibly AEBP2. The minimum components required for methyltransferase activity of the PRC2/EED-EZH2 complex are EED, EZH2 and SUZ12. The PRC2 complex may also interact with DNMT1, DNMT3A, DNMT3B and PHF1 via the EZH2 subunit and with SIRT1 via the SUZ12 subunit. Interacts with HDAC1 and HDAC2. Binds ATRX via the SET domain. Interacts with PRAME. Interacts with CDYL. Interacts with EED. Interacts with BMAL1. Interacts with CLOCK and CRY1. Interacts with DNMT3L; the interaction is direct. Interacts with EZHIP; the interaction blocks EZH2 methyltransferase activity. Interacts with ZNF263; recruited to the SIX3 promoter along with other proteins involved in chromatin modification and transcriptional corepression where it contributes to transcriptional repression. Interacts with ARMC12. Interacts with ZMYND8; the interaction is dependent on the presence of chromatin. Interacts with DDX18; this interaction inhibits the PRC2 complex. Post-translationally, phosphorylated by AKT1. Phosphorylation by AKT1 reduces methyltransferase activity. Phosphorylation at Thr-345 by CDK1 and CDK2 promotes maintenance of H3K27me3 levels at EZH2-target loci, thus leading to epigenetic gene silencing. In terms of processing, sumoylated. Glycosylated: O-GlcNAcylation at Ser-75 by OGT increases stability of EZH2 and facilitates the formation of H3K27me3 by the PRC2/EED-EZH2 complex. As to expression, present in actively dividing cells. Widely expressed in early embryos. In later embryogenesis, expression restricted to central and peripheral nervous system, liver and thymus. In adult, highest expression in spleen, testis and placenta. Lower levels in intestine, muscle and ovary and very low levels in brain and liver. No expression in heart, thyroid gland, lung and kidney.

It is found in the nucleus. The protein resides in the chromosome. It carries out the reaction L-lysyl(27)-[histone H3] + 3 S-adenosyl-L-methionine = N(6),N(6),N(6)-trimethyl-L-lysyl(27)-[histone H3] + 3 S-adenosyl-L-homocysteine + 3 H(+). Polycomb group (PcG) protein. Catalytic subunit of the PRC2/EED-EZH2 complex, which methylates (H3K9me) and 'Lys-27' (H3K27me) of histone H3, leading to transcriptional repression of the affected target gene. Able to mono-, di- and trimethylate 'Lys-27' of histone H3 to form H3K27me1, H3K27me2 and H3K27me3, respectively. Displays a preference for substrates with less methylation, loses activity when progressively more methyl groups are incorporated into H3K27, H3K27me0 &gt; H3K27me1 &gt; H3K27me2. Compared to EZH1-containing complexes, it is more abundant in embryonic stem cells and plays a major role in forming H3K27me3, which is required for embryonic stem cell identity and proper differentiation. The PRC2/EED-EZH2 complex may also serve as a recruiting platform for DNA methyltransferases, thereby linking two epigenetic repression systems. Genes repressed by the PRC2/EED-EZH2 complex include HOXA7, HOXB6 and HOXC8. EZH2 can also methylate non-histone proteins such as the transcription factor GATA4 and the nuclear receptor RORA. Regulates the circadian clock via histone methylation at the promoter of the circadian genes. Essential for the CRY1/2-mediated repression of the transcriptional activation of PER1/2 by the CLOCK-BMAL1 heterodimer; involved in the di and trimethylation of 'Lys-27' of histone H3 on PER1/2 promoters which is necessary for the CRY1/2 proteins to inhibit transcription. This Mus musculus (Mouse) protein is Histone-lysine N-methyltransferase EZH2.